Reading from the N-terminus, the 288-residue chain is ATP synthase gamma chain (288 aa).

Belongs to the ATPase gamma chain family. F-type ATPases have 2 components, CF(1) - the catalytic core - and CF(0) - the membrane proton channel. CF(1) has five subunits: alpha(3), beta(3), gamma(1), delta(1), epsilon(1). CF(0) has three main subunits: a, b and c.

It is found in the cell inner membrane. Functionally, produces ATP from ADP in the presence of a proton gradient across the membrane. The gamma chain is believed to be important in regulating ATPase activity and the flow of protons through the CF(0) complex. This chain is ATP synthase gamma chain, found in Rickettsia prowazekii (strain Madrid E).